We begin with the raw amino-acid sequence, 704 residues long: Elongation factor G (704 aa).

Positions 8 to 290 (EKYRNIGICA…GVVRYLPAPN (283 aa)) constitute a tr-type G domain. Residues 17–24 (AHVDAGKT), 88–92 (DTPGH), and 142–145 (NKMD) each bind GTP.

This sequence belongs to the TRAFAC class translation factor GTPase superfamily. Classic translation factor GTPase family. EF-G/EF-2 subfamily.

It is found in the cytoplasm. Functionally, catalyzes the GTP-dependent ribosomal translocation step during translation elongation. During this step, the ribosome changes from the pre-translocational (PRE) to the post-translocational (POST) state as the newly formed A-site-bound peptidyl-tRNA and P-site-bound deacylated tRNA move to the P and E sites, respectively. Catalyzes the coordinated movement of the two tRNA molecules, the mRNA and conformational changes in the ribosome. This chain is Elongation factor G, found in Francisella tularensis subsp. holarctica (strain LVS).